A 248-amino-acid polypeptide reads, in one-letter code: 2,3-bisphosphoglycerate-dependent phosphoglycerate mutase (248 aa).

Substrate is bound by residues 10 to 17 (RHGQSQWN), 23 to 24 (TG), R62, 89 to 92 (ERHY), K100, 116 to 117 (RR), and 183 to 184 (GN). H11 acts as the Tele-phosphohistidine intermediate in catalysis. E89 (proton donor/acceptor) is an active-site residue.

Belongs to the phosphoglycerate mutase family. BPG-dependent PGAM subfamily.

The enzyme catalyses (2R)-2-phosphoglycerate = (2R)-3-phosphoglycerate. It participates in carbohydrate degradation; glycolysis; pyruvate from D-glyceraldehyde 3-phosphate: step 3/5. In terms of biological role, catalyzes the interconversion of 2-phosphoglycerate and 3-phosphoglycerate. The protein is 2,3-bisphosphoglycerate-dependent phosphoglycerate mutase of Corynebacterium kroppenstedtii (strain DSM 44385 / JCM 11950 / CIP 105744 / CCUG 35717).